A 654-amino-acid polypeptide reads, in one-letter code: Peptide-N(4)-(N-acetyl-beta-glucosaminyl)asparagine amidase (654 aa).

At Ala-2 the chain carries N-acetylalanine. Residues 30–91 enclose the PUB domain; it reads EASKLLLTYA…EGETHLIFPK (62 aa). The interval 112–163 is disordered; that stretch reads RLDGSNKSHKVKSSQQPAASTQLPTTPSSNPSGLNQHTRNRQGQSSDPPSAS. Over residues 124–163 the composition is skewed to polar residues; it reads SSQQPAASTQLPTTPSSNPSGLNQHTRNRQGQSSDPPSAS. The residue at position 137 (Thr-137) is a Phosphothreonine. Zn(2+) contacts are provided by Cys-250, Cys-253, Cys-283, and Cys-286. Catalysis depends on Cys-309, which acts as the Nucleophile. Active-site residues include His-336 and Asp-353. The PAW domain maps to 454 to 654; it reads ELGGRISGSV…LEIIIKFSDL (201 aa).

It belongs to the transglutaminase-like superfamily. PNGase family. As to quaternary structure, component of a complex required to couple retrotranslocation, ubiquitination and deglycosylation composed of NGLY1, SAKS1, AMFR, VCP and RAD23B. Interacts with the proteasome components RAD23B and PSMC1. Interacts with directly with VCP. Interacts with DERL1, bringing it close to the endoplasmic reticulum membrane. Interacts with SAKS1. Zn(2+) serves as cofactor.

It is found in the cytoplasm. The catalysed reaction is Hydrolysis of an N(4)-(acetyl-beta-D-glucosaminyl)asparagine residue in which the glucosamine residue may be further glycosylated, to yield a (substituted) N-acetyl-beta-D-glucosaminylamine and a peptide containing an aspartate residue.. Its activity is regulated as follows. Inhibited by Z-VAD-fmk, a well-known caspase inhibitor, which inhibits enzyme activity through covalent binding of the carbohydrate to the single Cys-306 residue. In terms of biological role, specifically deglycosylates the denatured form of N-linked glycoproteins in the cytoplasm and assists their proteasome-mediated degradation. Cleaves the beta-aspartyl-glucosamine (GlcNAc) of the glycan and the amide side chain of Asn, converting Asn to Asp. Prefers proteins containing high-mannose over those bearing complex type oligosaccharides. Can recognize misfolded proteins in the endoplasmic reticulum that are exported to the cytosol to be destroyed and deglycosylate them, while it has no activity toward native proteins. Deglycosylation is a prerequisite for subsequent proteasome-mediated degradation of some, but not all, misfolded glycoproteins. In Homo sapiens (Human), this protein is Peptide-N(4)-(N-acetyl-beta-glucosaminyl)asparagine amidase (NGLY1).